A 1295-amino-acid polypeptide reads, in one-letter code: Phosphoribosylformylglycinamidine synthase (1295 aa).

ATP-binding positions include 305–316 (GAATGSGGEIRD), 384–386 (TGY), and alanine 676. Residues aspartate 677, glutamate 716, asparagine 720, and aspartate 884 each coordinate Mg(2+). Residue serine 886 participates in ATP binding. The Glutamine amidotransferase type-1 domain maps to 1042 to 1295 (VAILREQGVN…MFRNARKHLG (254 aa)). Cysteine 1135 (nucleophile) is an active-site residue. Active-site residues include histidine 1260 and glutamate 1262.

In the N-terminal section; belongs to the FGAMS family. Monomer.

Its subcellular location is the cytoplasm. It carries out the reaction N(2)-formyl-N(1)-(5-phospho-beta-D-ribosyl)glycinamide + L-glutamine + ATP + H2O = 2-formamido-N(1)-(5-O-phospho-beta-D-ribosyl)acetamidine + L-glutamate + ADP + phosphate + H(+). The protein operates within purine metabolism; IMP biosynthesis via de novo pathway; 5-amino-1-(5-phospho-D-ribosyl)imidazole from N(2)-formyl-N(1)-(5-phospho-D-ribosyl)glycinamide: step 1/2. In terms of biological role, phosphoribosylformylglycinamidine synthase involved in the purines biosynthetic pathway. Catalyzes the ATP-dependent conversion of formylglycinamide ribonucleotide (FGAR) and glutamine to yield formylglycinamidine ribonucleotide (FGAM) and glutamate. In Idiomarina loihiensis (strain ATCC BAA-735 / DSM 15497 / L2-TR), this protein is Phosphoribosylformylglycinamidine synthase.